A 104-amino-acid chain; its full sequence is Large ribosomal subunit protein uL24 (104 aa).

This sequence belongs to the universal ribosomal protein uL24 family. As to quaternary structure, part of the 50S ribosomal subunit.

Its function is as follows. One of two assembly initiator proteins, it binds directly to the 5'-end of the 23S rRNA, where it nucleates assembly of the 50S subunit. Functionally, one of the proteins that surrounds the polypeptide exit tunnel on the outside of the subunit. The polypeptide is Large ribosomal subunit protein uL24 (Bradyrhizobium sp. (strain BTAi1 / ATCC BAA-1182)).